The following is a 376-amino-acid chain: PCM7-4 (376 aa).

Has antibacterial activity against Listeria monocytogenes. The sequence is that of PCM7-4 from Bacillus velezensis.